Here is a 200-residue protein sequence, read N- to C-terminus: ATP-dependent Clp protease proteolytic subunit 2 (200 aa).

Serine 100 serves as the catalytic Nucleophile.

The protein belongs to the peptidase S14 family. In terms of assembly, fourteen ClpP subunits assemble into 2 heptameric rings which stack back to back to give a disk-like structure with a central cavity, resembling the structure of eukaryotic proteasomes.

It is found in the cytoplasm. The catalysed reaction is Hydrolysis of proteins to small peptides in the presence of ATP and magnesium. alpha-casein is the usual test substrate. In the absence of ATP, only oligopeptides shorter than five residues are hydrolyzed (such as succinyl-Leu-Tyr-|-NHMec, and Leu-Tyr-Leu-|-Tyr-Trp, in which cleavage of the -Tyr-|-Leu- and -Tyr-|-Trp bonds also occurs).. Its function is as follows. Cleaves peptides in various proteins in a process that requires ATP hydrolysis. Has a chymotrypsin-like activity. Plays a major role in the degradation of misfolded proteins. The sequence is that of ATP-dependent Clp protease proteolytic subunit 2 from Streptomyces avermitilis (strain ATCC 31267 / DSM 46492 / JCM 5070 / NBRC 14893 / NCIMB 12804 / NRRL 8165 / MA-4680).